A 354-amino-acid chain; its full sequence is Divinyl chlorophyll a/b light-harvesting protein PcbF (354 aa).

Helical transmembrane passes span 27–47 (FIASHAAHTGMIAFGAGSNTL), 88–108 (VVTLAILHLILSMVYGAGGLL), 140–160 (FILGHHLILFGLACAWFVEWA), 201–221 (VMGGHAFLAFAEITGGCFHAI), 248–268 (AILSFSLAGIGWMAIVAAFWC), and 315–335 (TANFHYIAGFFAFQGHLWHAL).

The protein belongs to the PsbB/PsbC family. IsiA/Pcb subfamily. As to quaternary structure, the antenna complex consists of divinyl chlorophylls (a and b) and divinyl chlorophyll a/b binding proteins and binds more divinyl chlorophyll b than does the antenna complex from high-light-adapted Prochlorococcus. Requires divinyl chlorophyll a as cofactor. It depends on divinyl chlorophyll b as a cofactor.

It is found in the cellular thylakoid membrane. Its function is as follows. The antenna complex functions as a light receptor, it captures and delivers excitation energy to photosystems II and I. The Prochlorales pcb genes are not related to higher plant LHCs. The chain is Divinyl chlorophyll a/b light-harvesting protein PcbF (pcbF) from Prochlorococcus marinus (strain SARG / CCMP1375 / SS120).